Here is an 838-residue protein sequence, read N- to C-terminus: Sec1 family domain-containing protein MIP3 (838 aa).

The disordered stretch occupies residues 637–677 (KSEETKEIPSDDQLDIDALDDDPWGKWGDEEEEEVDNSKAD). Acidic residues predominate over residues 646–658 (SDDQLDIDALDDD).

This sequence belongs to the STXBP/unc-18/SEC1 family. Forms a complex with MAG2, ZW10/MIP1 and MIP2 on the endoplasmic reticulum.

It localises to the endoplasmic reticulum membrane. Required for proper maturation of seed storage proteins. Forms a complex with MAG2, ZW10/MIP1 and MIP2 on the endoplasmic reticulum that may be responsible for efficient transport of seed storage proteins. The polypeptide is Sec1 family domain-containing protein MIP3 (Arabidopsis thaliana (Mouse-ear cress)).